A 197-amino-acid polypeptide reads, in one-letter code: Amino-terminal enhancer of split (197 aa).

Residues 1 to 15 show a composition bias toward low complexity; it reads MMFPQSSSRHSGSSH. 2 disordered regions span residues 1–20 and 169–197; these read MMFP…PQQL and LGSQ…DKSD. The tract at residues 166-197 is CCN domain; that stretch reads LSALGSQGHLPKEDKNGHEGDRRPDDDGDKSD. A compositionally biased stretch (basic and acidic residues) spans 175–197; sequence LPKEDKNGHEGDRRPDDDGDKSD.

Belongs to the WD repeat Groucho/TLE family. In terms of assembly, monomer. Ubiquitinated by XIAP/BIRC4. As to expression, predominantly expressed in brain, testis and ovary. Ubiquitously expressed in the developing embryo. Present in unfertilized and fertilized eggs.

It is found in the nucleus. In terms of biological role, may act as a transcriptional corepressor. Has a possible role in the negative regulation of proteins containing WD-40 repeats. May be required for the initiation and maintenance of the differentiated state. This chain is Amino-terminal enhancer of split (aes), found in Xenopus laevis (African clawed frog).